The primary structure comprises 354 residues: Transcription activator of gluconeogenesis ERT1-1 (354 aa).

Residues Met1–Ala29 form a disordered region. A DNA-binding region (zn(2)-C6 fungal-type) is located at residues Cys32 to Cys60. Disordered stretches follow at residues Leu71–Ser111 and Asp128–Pro169. Residues Gln81–Gln98 show a composition bias toward low complexity. A compositionally biased stretch (polar residues) spans Ser159–Pro169.

Belongs to the ERT1/acuK family.

The protein localises to the nucleus. Its function is as follows. Transcription factor which regulates nonfermentable carbon utilization. Activator of gluconeogenetic genes. The polypeptide is Transcription activator of gluconeogenesis ERT1-1 (ERT1-1) (Yarrowia lipolytica (strain CLIB 122 / E 150) (Yeast)).